The primary structure comprises 131 residues: Profilin-1 (131 aa).

C13 and C115 form a disulfide bridge. Positions 81–97 match the Involved in PIP2 interaction motif; the sequence is AVIRGKKGSGGITVKKT. T111 is subject to Phosphothreonine.

It belongs to the profilin family. Multimer. Occurs in many kinds of cells as a complex with monomeric actin in a 1:1 ratio. Post-translationally, phosphorylated by MAP kinases. In terms of tissue distribution, pollen specific.

It is found in the cytoplasm. It localises to the cytoskeleton. In terms of biological role, binds to actin and affects the structure of the cytoskeleton. At high concentrations, profilin prevents the polymerization of actin, whereas it enhances it at low concentrations. By binding to PIP2, it inhibits the formation of IP3 and DG. The polypeptide is Profilin-1 (PRO1) (Zea mays (Maize)).